The sequence spans 67 residues: DNA-directed RNA polymerase subunit omega (67 aa).

It belongs to the RNA polymerase subunit omega family. The RNAP catalytic core consists of 2 alpha, 1 beta, 1 beta' and 1 omega subunit. When a sigma factor is associated with the core the holoenzyme is formed, which can initiate transcription.

The enzyme catalyses RNA(n) + a ribonucleoside 5'-triphosphate = RNA(n+1) + diphosphate. Promotes RNA polymerase assembly. Latches the N- and C-terminal regions of the beta' subunit thereby facilitating its interaction with the beta and alpha subunits. In Albidiferax ferrireducens (strain ATCC BAA-621 / DSM 15236 / T118) (Rhodoferax ferrireducens), this protein is DNA-directed RNA polymerase subunit omega.